The chain runs to 355 residues: Ribosomal RNA large subunit methyltransferase M (355 aa).

S-adenosyl-L-methionine-binding positions include Ser183, 216 to 219, Asp235, Asp255, and Asp271; that span reads SPGG. Residue Lys300 is the Proton acceptor of the active site.

The protein belongs to the class I-like SAM-binding methyltransferase superfamily. RNA methyltransferase RlmE family. RlmM subfamily. As to quaternary structure, monomer.

The protein resides in the cytoplasm. It carries out the reaction cytidine(2498) in 23S rRNA + S-adenosyl-L-methionine = 2'-O-methylcytidine(2498) in 23S rRNA + S-adenosyl-L-homocysteine + H(+). Catalyzes the 2'-O-methylation at nucleotide C2498 in 23S rRNA. In Pseudomonas putida (strain W619), this protein is Ribosomal RNA large subunit methyltransferase M.